The sequence spans 58 residues: MYFNYKSVCGSCGFGSCYGCGYGCIHSTHCGCNGYYGCYENKYSVIDDLIFFASKKCH.

Interacts with hair keratins.

In terms of biological role, in the hair cortex, hair keratin intermediate filaments are embedded in an interfilamentous matrix, consisting of hair keratin-associated proteins (KRTAP), which are essential for the formation of a rigid and resistant hair shaft through their extensive disulfide bond cross-linking with abundant cysteine residues of hair keratins. The matrix proteins include the high-sulfur and high-glycine-tyrosine keratins. The sequence is that of Keratin-associated protein 21-3 (KRTAP21-3) from Homo sapiens (Human).